Here is a 98-residue protein sequence, read N- to C-terminus: ATP-dependent Clp protease adapter protein ClpS (98 aa).

The protein belongs to the ClpS family. As to quaternary structure, binds to the N-terminal domain of the chaperone ClpA.

In terms of biological role, involved in the modulation of the specificity of the ClpAP-mediated ATP-dependent protein degradation. The protein is ATP-dependent Clp protease adapter protein ClpS of Synechocystis sp. (strain ATCC 27184 / PCC 6803 / Kazusa).